The following is a 270-amino-acid chain: uncharacterized protein (270 aa).

It to T.pallidum TP_0127, TP_0315 and TP_0618.

This is an uncharacterized protein from Treponema pallidum (strain Nichols).